The sequence spans 416 residues: MTYIPKSDFMAVMMARGFMADCTDYQGLDEALLKGVQPAYIGFDATAKSLHVGSLIQIMMLRWFQKTGHKPLTLMGGGTTKVGDPSFRADERPLLGPEAIDDNIAGIKQVFSAYIDYSDAPTGALMLNNAEWLDNLNYLDFLRDIGRHFSINRMLSFESVKSRLDREQSLSFLEFNYMILQAYDFMELYRRYGCILQLGGSDQWGNIVNGIDLTRRVIDGEVYGLTSPLLTTSDGKKMGKSQSGAVWLNADMFSPYEFWQFWRNTTDADVGRFLKLYTELPLDECERLGALAGSEINAAKITLANEVTTLLHGAEAAATAAQTARDVFEKGGVGDDLPTLTLSAEDVAQGISIVQLIVKSGLANSGKEAKRLIAENGAKMDDAPLTNAGLMIDAAALQSPIKLSAGKKRHAMVQLG.

Tyr-40 provides a ligand contact to L-tyrosine. Residues 45-54 (ATAKSLHVGS) carry the 'HIGH' region motif. Residues Tyr-177 and Gln-181 each contribute to the L-tyrosine site. Residues 237 to 241 (KMGKS) carry the 'KMSKS' region motif. Lys-240 contributes to the ATP binding site. One can recognise an S4 RNA-binding domain in the interval 351 to 415 (ISIVQLIVKS…GKKRHAMVQL (65 aa)).

Belongs to the class-I aminoacyl-tRNA synthetase family. TyrS type 1 subfamily. In terms of assembly, homodimer.

It is found in the cytoplasm. The catalysed reaction is tRNA(Tyr) + L-tyrosine + ATP = L-tyrosyl-tRNA(Tyr) + AMP + diphosphate + H(+). Catalyzes the attachment of tyrosine to tRNA(Tyr) in a two-step reaction: tyrosine is first activated by ATP to form Tyr-AMP and then transferred to the acceptor end of tRNA(Tyr). The chain is Tyrosine--tRNA ligase from Roseobacter denitrificans (strain ATCC 33942 / OCh 114) (Erythrobacter sp. (strain OCh 114)).